The following is a 178-amino-acid chain: tRNA (cytidine(56)-2'-O)-methyltransferase (178 aa).

Residues Leu-84, 109 to 113 (GAEKV), and 127 to 134 (IGNQPHSE) each bind S-adenosyl-L-methionine.

It belongs to the aTrm56 family. Homodimer.

It localises to the cytoplasm. The enzyme catalyses cytidine(56) in tRNA + S-adenosyl-L-methionine = 2'-O-methylcytidine(56) in tRNA + S-adenosyl-L-homocysteine + H(+). In terms of biological role, specifically catalyzes the AdoMet-dependent 2'-O-ribose methylation of cytidine at position 56 in tRNAs. The protein is tRNA (cytidine(56)-2'-O)-methyltransferase of Methanococcoides burtonii (strain DSM 6242 / NBRC 107633 / OCM 468 / ACE-M).